The chain runs to 243 residues: 4-hydroxy-tetrahydrodipicolinate reductase (243 aa).

Residues 9–14 (GANGKM), 78–80 (GTS), and 104–107 (APNF) contribute to the NAD(+) site. Histidine 134 serves as the catalytic Proton donor/acceptor. Histidine 135 contacts (S)-2,3,4,5-tetrahydrodipicolinate. Catalysis depends on lysine 138, which acts as the Proton donor. Position 144-145 (144-145 (GT)) interacts with (S)-2,3,4,5-tetrahydrodipicolinate.

Belongs to the DapB family.

It localises to the cytoplasm. The enzyme catalyses (S)-2,3,4,5-tetrahydrodipicolinate + NAD(+) + H2O = (2S,4S)-4-hydroxy-2,3,4,5-tetrahydrodipicolinate + NADH + H(+). The catalysed reaction is (S)-2,3,4,5-tetrahydrodipicolinate + NADP(+) + H2O = (2S,4S)-4-hydroxy-2,3,4,5-tetrahydrodipicolinate + NADPH + H(+). It participates in amino-acid biosynthesis; L-lysine biosynthesis via DAP pathway; (S)-tetrahydrodipicolinate from L-aspartate: step 4/4. Its function is as follows. Catalyzes the conversion of 4-hydroxy-tetrahydrodipicolinate (HTPA) to tetrahydrodipicolinate. This Legionella pneumophila subsp. pneumophila (strain Philadelphia 1 / ATCC 33152 / DSM 7513) protein is 4-hydroxy-tetrahydrodipicolinate reductase.